The chain runs to 722 residues: 1,4-alpha-glucan branching enzyme GlgB (722 aa).

The Nucleophile role is filled by aspartate 401. Glutamate 454 serves as the catalytic Proton donor.

It belongs to the glycosyl hydrolase 13 family. GlgB subfamily. Monomer.

The catalysed reaction is Transfers a segment of a (1-&gt;4)-alpha-D-glucan chain to a primary hydroxy group in a similar glucan chain.. The protein operates within glycan biosynthesis; glycogen biosynthesis. In terms of biological role, catalyzes the formation of the alpha-1,6-glucosidic linkages in glycogen by scission of a 1,4-alpha-linked oligosaccharide from growing alpha-1,4-glucan chains and the subsequent attachment of the oligosaccharide to the alpha-1,6 position. This Rubrobacter xylanophilus (strain DSM 9941 / JCM 11954 / NBRC 16129 / PRD-1) protein is 1,4-alpha-glucan branching enzyme GlgB.